A 429-amino-acid polypeptide reads, in one-letter code: Phosphoribosylamine--glycine ligase (429 aa).

One can recognise an ATP-grasp domain in the interval 109-316 (KDFLARHQIP…LVELCLAAID (208 aa)). 135–196 (VREQGAPIVV…EEFLDGEEAS (62 aa)) contributes to the ATP binding site. Residues 212–234 (SQDHKRVGDKDTGPNTGGMGAYS) are disordered. The span at 213–223 (QDHKRVGDKDT) shows a compositional bias: basic and acidic residues. Glu-286 and Asn-288 together coordinate Mg(2+).

This sequence belongs to the GARS family. Mg(2+) serves as cofactor. It depends on Mn(2+) as a cofactor.

The catalysed reaction is 5-phospho-beta-D-ribosylamine + glycine + ATP = N(1)-(5-phospho-beta-D-ribosyl)glycinamide + ADP + phosphate + H(+). The protein operates within purine metabolism; IMP biosynthesis via de novo pathway; N(1)-(5-phospho-D-ribosyl)glycinamide from 5-phospho-alpha-D-ribose 1-diphosphate: step 2/2. The polypeptide is Phosphoribosylamine--glycine ligase (Vibrio vulnificus (strain CMCP6)).